Consider the following 150-residue polypeptide: D-aminoacyl-tRNA deacylase (150 aa).

A Gly-cisPro motif, important for rejection of L-amino acids motif is present at residues 138–139 (GP).

This sequence belongs to the DTD family. As to quaternary structure, homodimer.

The protein localises to the cytoplasm. It catalyses the reaction glycyl-tRNA(Ala) + H2O = tRNA(Ala) + glycine + H(+). The catalysed reaction is a D-aminoacyl-tRNA + H2O = a tRNA + a D-alpha-amino acid + H(+). In terms of biological role, an aminoacyl-tRNA editing enzyme that deacylates mischarged D-aminoacyl-tRNAs. Also deacylates mischarged glycyl-tRNA(Ala), protecting cells against glycine mischarging by AlaRS. Acts via tRNA-based rather than protein-based catalysis; rejects L-amino acids rather than detecting D-amino acids in the active site. By recycling D-aminoacyl-tRNA to D-amino acids and free tRNA molecules, this enzyme counteracts the toxicity associated with the formation of D-aminoacyl-tRNA entities in vivo and helps enforce protein L-homochirality. This is D-aminoacyl-tRNA deacylase from Bacteroides fragilis (strain ATCC 25285 / DSM 2151 / CCUG 4856 / JCM 11019 / LMG 10263 / NCTC 9343 / Onslow / VPI 2553 / EN-2).